Reading from the N-terminus, the 603-residue chain is MTNVPISRLRNFCIIAHIDHGKSTLADRLLQDTGTVSSRDMQEQFLDNMDLERERGITIKLQAARMNYKADDGEEYVLNLIDTPGHVDFSYEVSRSLQACEGALLVVDASQGVEAQTLANVYLALENDLEIIPVLNKVDLPGADPEKIKNEIESIIGLDTSKAISCSAKTGVGIPEILQAVVDRIPSPKDNTDQATKALIFDSYYDPYRGVIVYFRIMSGGISKKDKVLLMSSKKSYELDEIGVMAPDQVKVNSLHAGEVGYLAASIKAVADARVGDTITLVDRPAEDALPGYAEAKPMVFCGLFPTDADQYPDLRDALDKLQLSDAALKYEPETSSAMGFGFRCGFLGLLHMEIVQERLEREYDLDLIVTAPSVIYKVKMIDGEVKMIDNPATLPDPQKRETIEEPYVRMEIYAPNDYNGTLMGLCQDRRGDFIDMKYITTDRVTLIYEIPLAEVVTDFFDQMKSRTKGYASMEYHLIGYRENDLVRLDVLINSERADPLTTIVHKDNAYGVGKGLVEKLKELIPKQQFKIPLQASIGSRIIASEGISALRKDVLSKCYGGDISRKKKLLKKQAKGKKRMKSMGKVDVPQEAFMAVLKLNND.

In terms of domain architecture, tr-type G spans 7-189 (SRLRNFCIIA…AVVDRIPSPK (183 aa)). GTP-binding positions include 19-24 (DHGKST) and 136-139 (NKVD).

This sequence belongs to the TRAFAC class translation factor GTPase superfamily. Classic translation factor GTPase family. LepA subfamily.

It localises to the cell inner membrane. It catalyses the reaction GTP + H2O = GDP + phosphate + H(+). Required for accurate and efficient protein synthesis under certain stress conditions. May act as a fidelity factor of the translation reaction, by catalyzing a one-codon backward translocation of tRNAs on improperly translocated ribosomes. Back-translocation proceeds from a post-translocation (POST) complex to a pre-translocation (PRE) complex, thus giving elongation factor G a second chance to translocate the tRNAs correctly. Binds to ribosomes in a GTP-dependent manner. The sequence is that of Elongation factor 4 from Prochlorococcus marinus (strain NATL1A).